We begin with the raw amino-acid sequence, 367 residues long: tRNA 2-selenouridine synthase (367 aa).

One can recognise a Rhodanese domain in the interval 12-135; that stretch reads FLSGVAMLDV…MRGFLIETTD (124 aa). C95 acts as the S-selanylcysteine intermediate in catalysis.

It belongs to the SelU family. Monomer.

It catalyses the reaction 5-methylaminomethyl-2-thiouridine(34) in tRNA + selenophosphate + (2E)-geranyl diphosphate + H2O + H(+) = 5-methylaminomethyl-2-selenouridine(34) in tRNA + (2E)-thiogeraniol + phosphate + diphosphate. The enzyme catalyses 5-methylaminomethyl-2-thiouridine(34) in tRNA + (2E)-geranyl diphosphate = 5-methylaminomethyl-S-(2E)-geranyl-thiouridine(34) in tRNA + diphosphate. The catalysed reaction is 5-methylaminomethyl-S-(2E)-geranyl-thiouridine(34) in tRNA + selenophosphate + H(+) = 5-methylaminomethyl-2-(Se-phospho)selenouridine(34) in tRNA + (2E)-thiogeraniol. It carries out the reaction 5-methylaminomethyl-2-(Se-phospho)selenouridine(34) in tRNA + H2O = 5-methylaminomethyl-2-selenouridine(34) in tRNA + phosphate. Functionally, involved in the post-transcriptional modification of the uridine at the wobble position (U34) of tRNA(Lys), tRNA(Glu) and tRNA(Gln). Catalyzes the conversion of 2-thiouridine (S2U-RNA) to 2-selenouridine (Se2U-RNA). Acts in a two-step process involving geranylation of 2-thiouridine (S2U) to S-geranyl-2-thiouridine (geS2U) and subsequent selenation of the latter derivative to 2-selenouridine (Se2U) in the tRNA chain. This is tRNA 2-selenouridine synthase from Cupriavidus necator (strain ATCC 17699 / DSM 428 / KCTC 22496 / NCIMB 10442 / H16 / Stanier 337) (Ralstonia eutropha).